Here is a 191-residue protein sequence, read N- to C-terminus: Transcription factor FapR (191 aa).

The 68-residue stretch at 102–169 folds into the MaoC-like domain; that stretch reads GIARGHHLFA…RILVTSHVNQ (68 aa).

It belongs to the FapR family.

In terms of biological role, transcriptional factor involved in regulation of membrane lipid biosynthesis by repressing genes involved in fatty acid and phospholipid metabolism. This Shouchella clausii (strain KSM-K16) (Alkalihalobacillus clausii) protein is Transcription factor FapR.